Here is a 135-residue protein sequence, read N- to C-terminus: uncharacterized protein (135 aa).

2 consecutive transmembrane segments (helical) span residues 11-31 (ILFF…GYLI) and 57-77 (LGTA…TDAI).

It is found in the cell membrane. This is an uncharacterized protein from Methanocaldococcus jannaschii (strain ATCC 43067 / DSM 2661 / JAL-1 / JCM 10045 / NBRC 100440) (Methanococcus jannaschii).